Here is a 396-residue protein sequence, read N- to C-terminus: S-adenosylmethionine synthase (396 aa).

His-16 is an ATP binding site. Mg(2+) is bound at residue Asp-18. Glu-44 lines the K(+) pocket. L-methionine is bound by residues Glu-57 and Gln-100. Residues 100–110 (QSQDIARGVDN) are flexible loop. ATP is bound by residues 162–164 (DGK), 228–229 (RF), Asp-237, 243–244 (RK), Ala-260, and Lys-264. An L-methionine-binding site is contributed by Asp-237. Lys-268 contacts L-methionine.

It belongs to the AdoMet synthase family. Homotetramer; dimer of dimers. The cofactor is Mg(2+). K(+) serves as cofactor.

The protein resides in the cytoplasm. It catalyses the reaction L-methionine + ATP + H2O = S-adenosyl-L-methionine + phosphate + diphosphate. The protein operates within amino-acid biosynthesis; S-adenosyl-L-methionine biosynthesis; S-adenosyl-L-methionine from L-methionine: step 1/1. Its function is as follows. Catalyzes the formation of S-adenosylmethionine (AdoMet) from methionine and ATP. The overall synthetic reaction is composed of two sequential steps, AdoMet formation and the subsequent tripolyphosphate hydrolysis which occurs prior to release of AdoMet from the enzyme. In Myxococcus xanthus (strain DK1622), this protein is S-adenosylmethionine synthase.